Here is a 380-residue protein sequence, read N- to C-terminus: Glucose-1-phosphate adenylyltransferase (380 aa).

Alpha-D-glucose 1-phosphate is bound by residues glycine 164, 179 to 180 (EK), and serine 190.

The protein belongs to the bacterial/plant glucose-1-phosphate adenylyltransferase family. Homotetramer.

It catalyses the reaction alpha-D-glucose 1-phosphate + ATP + H(+) = ADP-alpha-D-glucose + diphosphate. Its pathway is glycan biosynthesis; glycogen biosynthesis. Its function is as follows. Involved in the biosynthesis of ADP-glucose, a building block required for the elongation reactions to produce glycogen. Catalyzes the reaction between ATP and alpha-D-glucose 1-phosphate (G1P) to produce pyrophosphate and ADP-Glc. The sequence is that of Glucose-1-phosphate adenylyltransferase from Lactococcus lactis subsp. lactis (strain IL1403) (Streptococcus lactis).